The sequence spans 192 residues: RNA pyrophosphohydrolase (192 aa).

The region spanning 6–149 (GYRPNVGIVI…KKDVYRKVMK (144 aa)) is the Nudix hydrolase domain. The Nudix box signature appears at 38–59 (GGINDNETAEQAMYRELYEEAG).

This sequence belongs to the Nudix hydrolase family. RppH subfamily. It depends on a divalent metal cation as a cofactor.

In terms of biological role, accelerates the degradation of transcripts by removing pyrophosphate from the 5'-end of triphosphorylated RNA, leading to a more labile monophosphorylated state that can stimulate subsequent ribonuclease cleavage. The protein is RNA pyrophosphohydrolase of Histophilus somni (strain 129Pt) (Haemophilus somnus).